The chain runs to 282 residues: Acetylglutamate kinase (282 aa).

Residues 62 to 63 (GG), arginine 84, and asparagine 178 each bind substrate.

Belongs to the acetylglutamate kinase family. ArgB subfamily.

It is found in the cytoplasm. The enzyme catalyses N-acetyl-L-glutamate + ATP = N-acetyl-L-glutamyl 5-phosphate + ADP. It participates in amino-acid biosynthesis; L-arginine biosynthesis; N(2)-acetyl-L-ornithine from L-glutamate: step 2/4. Functionally, catalyzes the ATP-dependent phosphorylation of N-acetyl-L-glutamate. This Thermotoga sp. (strain RQ2) protein is Acetylglutamate kinase.